Reading from the N-terminus, the 299-residue chain is Protein FAM228A (299 aa).

The interval 135–201 (AKGTSYQHGR…GRNRYKGASS (67 aa)) is disordered. Residues 146–159 (KTHDTQKEAKETEK) show a composition bias toward basic and acidic residues. A Phosphoserine modification is found at Ser264.

The protein belongs to the FAM228 family.

In Mus musculus (Mouse), this protein is Protein FAM228A (Fam228a).